Consider the following 68-residue polypeptide: MKLQTLMDWEEAHEKNRKNKRKAEALVAALQTCRVQDPPGTSTDCYLLPVLKPGHFKKNCPSHKKKPP.

The sequence is that of Putative transcript Y 10 protein (TTTY10) from Homo sapiens (Human).